A 347-amino-acid chain; its full sequence is NADH-ubiquinone oxidoreductase chain 2 (347 aa).

A run of 10 helical transmembrane segments spans residues 3-23 (PIIL…TMIS), 25-45 (HWLL…PILM), 59-79 (YFLT…INTA), 96-116 (LVTM…FWVP), 127-147 (GMLL…QIFP), 150-170 (NPNI…WGGL), 193-213 (ILMY…MLTI), 240-260 (ITLT…LTGF), 274-294 (SNIM…YFYM), and 323-343 (IFLL…SPAL).

Belongs to the complex I subunit 2 family. As to quaternary structure, core subunit of respiratory chain NADH dehydrogenase (Complex I) which is composed of 45 different subunits. Interacts with TMEM242.

It localises to the mitochondrion inner membrane. The enzyme catalyses a ubiquinone + NADH + 5 H(+)(in) = a ubiquinol + NAD(+) + 4 H(+)(out). Functionally, core subunit of the mitochondrial membrane respiratory chain NADH dehydrogenase (Complex I) which catalyzes electron transfer from NADH through the respiratory chain, using ubiquinone as an electron acceptor. Essential for the catalytic activity and assembly of complex I. The polypeptide is NADH-ubiquinone oxidoreductase chain 2 (Lemur catta (Ring-tailed lemur)).